Consider the following 59-residue polypeptide: MKKMKVTQFKSGAHRLKSHKACLKGLGLRRINHSVVVEDTPSTRGMVNRVNYLVKVEEA.

The protein belongs to the universal ribosomal protein uL30 family. As to quaternary structure, part of the 50S ribosomal subunit.

This Psychrobacter cryohalolentis (strain ATCC BAA-1226 / DSM 17306 / VKM B-2378 / K5) protein is Large ribosomal subunit protein uL30.